A 238-amino-acid polypeptide reads, in one-letter code: Ribonuclease PH (238 aa).

Phosphate is bound by residues Arg-86 and Gly-124–Arg-126.

The protein belongs to the RNase PH family. Homohexameric ring arranged as a trimer of dimers.

It carries out the reaction tRNA(n+1) + phosphate = tRNA(n) + a ribonucleoside 5'-diphosphate. In terms of biological role, phosphorolytic 3'-5' exoribonuclease that plays an important role in tRNA 3'-end maturation. Removes nucleotide residues following the 3'-CCA terminus of tRNAs; can also add nucleotides to the ends of RNA molecules by using nucleoside diphosphates as substrates, but this may not be physiologically important. Probably plays a role in initiation of 16S rRNA degradation (leading to ribosome degradation) during starvation. This Dichelobacter nodosus (strain VCS1703A) protein is Ribonuclease PH.